Reading from the N-terminus, the 987-residue chain is Leucine--tRNA ligase (987 aa).

A 'HIGH' region motif is present at residues P69–H80. The 'KMSKS' region signature appears at K760–S764. Residue K763 coordinates ATP.

The protein belongs to the class-I aminoacyl-tRNA synthetase family.

It is found in the cytoplasm. The enzyme catalyses tRNA(Leu) + L-leucine + ATP = L-leucyl-tRNA(Leu) + AMP + diphosphate. The chain is Leucine--tRNA ligase from Bifidobacterium longum (strain DJO10A).